The following is a 144-amino-acid chain: UPF0225 protein RSc0270 (144 aa).

Belongs to the UPF0225 family.

The sequence is that of UPF0225 protein RSc0270 from Ralstonia nicotianae (strain ATCC BAA-1114 / GMI1000) (Ralstonia solanacearum).